A 194-amino-acid chain; its full sequence is Orotate phosphoribosyltransferase (194 aa).

114–122 lines the 5-phospho-alpha-D-ribose 1-diphosphate pocket; sequence EDVVTTGKS. The orotate site is built by T118 and R146.

It belongs to the purine/pyrimidine phosphoribosyltransferase family. PyrE subfamily. As to quaternary structure, homodimer. Requires Mg(2+) as cofactor.

The catalysed reaction is orotidine 5'-phosphate + diphosphate = orotate + 5-phospho-alpha-D-ribose 1-diphosphate. Its pathway is pyrimidine metabolism; UMP biosynthesis via de novo pathway; UMP from orotate: step 1/2. Functionally, catalyzes the transfer of a ribosyl phosphate group from 5-phosphoribose 1-diphosphate to orotate, leading to the formation of orotidine monophosphate (OMP). The sequence is that of Orotate phosphoribosyltransferase from Clostridioides difficile (strain 630) (Peptoclostridium difficile).